The sequence spans 197 residues: EF-hand calcium-binding domain-containing protein 9 (197 aa).

The Ca(2+) site is built by aspartate 58 and aspartate 69. EF-hand domains are found at residues 59–94 (LKKA…LLAH), 100–135 (GQFM…FLFN), and 136–171 (IQKQ…YTDK). Residues aspartate 149, aspartate 153, arginine 155, and glutamate 160 each coordinate Ca(2+). Basic and acidic residues predominate over residues 177 to 188 (KTEEKEKGERKR). Residues 177–197 (KTEEKEKGERKRSLYSKCHIK) are disordered.

Component of the CatSper complex or CatSpermasome composed of the core pore-forming members CATSPER1, CATSPER2, CATSPER3 and CATSPER4 as well as auxiliary members CATSPERB, CATSPERG, CATSPERD, CATSPERE, CATSPERZ, C2CD6/CATSPERT, TMEM249, TMEM262 and EFCAB9. HSPA1 may be an additional auxiliary complex member. The core complex members CATSPER1, CATSPER2, CATSPER3 and CATSPER4 form a heterotetrameric channel. The auxiliary CATSPERB, CATSPERG, CATSPERD and CATSPERE subunits form a pavilion-like structure over the pore which stabilizes the complex through interactions with CATSPER4, CATSPER3, CATSPER1 and CATSPER2 respectively. TMEM262/CATSPERH interacts with CATSPERB, further stabilizing the complex. C2CD6/CATSPERT interacts at least with CATSPERD and is required for targeting the CatSper complex in the flagellar membrane. Interacts with CATSPERZ; the interaction is direct, Ca(2+)-dependent and connects EFCAB9 with the CatSper complex. Dissociates from CATSPERZ at elevated pH.

The protein resides in the cytoplasm. Its subcellular location is the cell projection. The protein localises to the cilium. It localises to the flagellum. Its function is as follows. Auxiliary component of the CatSper complex, a complex involved in sperm cell hyperactivation. pH-dependent Ca(2+) sensor required to activate the CatSper channel. Sperm cell hyperactivation is needed for sperm motility which is essential late in the preparation of sperm for fertilization. Associates with the CatSper complex via direct interaction with CATSPERZ, and senses intracellular Ca(2+). Together with CATSPERZ, associates with the CatSper channel pore and is required for the two-row structure of each single CatSper channel. The sequence is that of EF-hand calcium-binding domain-containing protein 9 from Homo sapiens (Human).